The chain runs to 124 residues: Seripauperin-19 (124 aa).

The signal sequence occupies residues 1–20; the sequence is MVKLTSIAAGVAAIAAGVAA.

This sequence belongs to the SRP1/TIP1 family. Seripauperin subfamily.

In Saccharomyces cerevisiae (strain ATCC 204508 / S288c) (Baker's yeast), this protein is Seripauperin-19 (PAU19).